A 522-amino-acid polypeptide reads, in one-letter code: Peptide chain release factor 3 (522 aa).

Residues 9–276 form the tr-type G domain; it reads KKRRTFAIIS…SFVNLAPAPQ (268 aa). GTP contacts are provided by residues 18–25, 86–90, and 140–143; these read SHPDAGKT, DTPGH, and NKLD.

The protein belongs to the TRAFAC class translation factor GTPase superfamily. Classic translation factor GTPase family. PrfC subfamily.

It is found in the cytoplasm. Functionally, increases the formation of ribosomal termination complexes and stimulates activities of RF-1 and RF-2. It binds guanine nucleotides and has strong preference for UGA stop codons. It may interact directly with the ribosome. The stimulation of RF-1 and RF-2 is significantly reduced by GTP and GDP, but not by GMP. In Lactobacillus gasseri (strain ATCC 33323 / DSM 20243 / BCRC 14619 / CIP 102991 / JCM 1131 / KCTC 3163 / NCIMB 11718 / NCTC 13722 / AM63), this protein is Peptide chain release factor 3.